The chain runs to 300 residues: 17-beta-hydroxysteroid dehydrogenase 13 (300 aa).

The N-terminal stretch at 1–19 (MNIILEILLLLITIIYSYL) is a signal peptide. S33 carries the post-translational modification Phosphoserine. 40–67 (LITGAGHGIGRQTTYEFAKRQSILVLWD) contributes to the NAD(+) binding site. Position 172 (S172) interacts with substrate. Y185 (proton acceptor) is an active-site residue. K189 contacts NAD(+).

The protein belongs to the short-chain dehydrogenases/reductases (SDR) family. In terms of tissue distribution, highly expressed in the liver. Also detected in ovary, bone marrow, kidney, brain, lung, skeletal muscle, bladder and testis.

It is found in the lipid droplet. It localises to the endoplasmic reticulum. The protein resides in the cytoplasm. The enzyme catalyses 17beta-estradiol + NAD(+) = estrone + NADH + H(+). It catalyses the reaction all-trans-retinol + NAD(+) = all-trans-retinal + NADH + H(+). The catalysed reaction is all-trans-retinal + NAD(+) + H2O = all-trans-retinoate + NADH + 2 H(+). Functionally, plays a pivotal role in hepatic lipid metabolism. In vitro, it catalyzes the oxidation of a variety of lipid substrates, including 17beta-estradiol, retinol, retinal, and leukotriene B4. Its function is as follows. Has retinol/retinal dehydrogenase activity in vitro. In terms of biological role, does not have retinol/retinal dehydrogenase activity in vitro. The protein is 17-beta-hydroxysteroid dehydrogenase 13 of Homo sapiens (Human).